Reading from the N-terminus, the 188-residue chain is CASP-like protein 4B1 (188 aa).

Positions 1-11 (MTNPDKQKPVE) are enriched in basic and acidic residues. The interval 1 to 34 (MTNPDKQKPVEVTDVETAAEKTSEPTPASGTSTI) is disordered. Residues 1–46 (MTNPDKQKPVEVTDVETAAEKTSEPTPASGTSTITQRWKREDLIKK) are Cytoplasmic-facing. Over residues 24–34 (EPTPASGTSTI) the composition is skewed to polar residues. A helical membrane pass occupies residues 47–67 (ASPITRGICLLFSLLAFLIMV). Over 68–84 (SNKHGYGRNFNEYEEYR) the chain is Extracellular. The helical transmembrane segment at 85–105 (YVLAISIISTLYTAWQTFAHF) threads the bilayer. The Cytoplasmic portion of the chain corresponds to 106 to 120 (SKREFFDRRTSTLVD). The helical transmembrane segment at 121–141 (FSGDQIVAYLLISAASSAIPL) threads the bilayer. Over 142–156 (TNRFREGQDNIFTDS) the chain is Extracellular. A helical membrane pass occupies residues 157 to 177 (AASAISMAIFAFVALALSALF). Over 178–188 (SGYKLSTHSFI) the chain is Cytoplasmic.

It belongs to the Casparian strip membrane proteins (CASP) family. In terms of assembly, homodimer and heterodimers.

It localises to the cell membrane. This Arabidopsis lyrata subsp. lyrata (Lyre-leaved rock-cress) protein is CASP-like protein 4B1.